The following is a 305-amino-acid chain: Divergent heme oxygenase-like protein (305 aa).

The first 18 residues, 1-18 (MIRKIIILMFTFFSNIHN), serve as a signal peptide directing secretion. Residues 1–83 (MIRKIIILMF…GVDKNNINYN (83 aa)) are sufficient for apicoplast targeting. N-linked (GlcNAc...) asparagine glycosylation is found at N132, N159, and N288.

Post-translationally, proteolytically cleaved; targeted by its N-terminal leader sequence for import into the apicoplast where it undergoes proteolytic processing, resulting in an N-terminus starting at or near Gly-33 in the mature protein.

The protein resides in the plastid. The protein localises to the apicoplast. Its function is as follows. Essential for blood-stage parasite viability. Required for apicoplast biogenesis. Associates with the apicoplast genome and mediates apicoplast gene expression. Can bind heme. Can bind protoporphyrin IX. The protein is Divergent heme oxygenase-like protein of Plasmodium falciparum (isolate 3D7).